The chain runs to 99 residues: Malonate decarboxylase acyl carrier protein (99 aa).

Position 25 is an O-(phosphoribosyl dephospho-coenzyme A)serine (serine 25).

Belongs to the MdcC family. Post-translationally, covalently binds the prosthetic group of malonate decarboxylase.

It localises to the cytoplasm. Its function is as follows. Subunit of malonate decarboxylase, it is an acyl carrier protein to which acetyl and malonyl thioester residues are bound via a 2'-(5''-phosphoribosyl)-3'-dephospho-CoA prosthetic group and turn over during the catalytic mechanism. This is Malonate decarboxylase acyl carrier protein from Pseudomonas fluorescens (strain SBW25).